The chain runs to 451 residues: Phosphoglucosamine mutase (451 aa).

Residue serine 101 is the Phosphoserine intermediate of the active site. Mg(2+) contacts are provided by serine 101, aspartate 240, aspartate 242, and aspartate 244. Position 101 is a phosphoserine (serine 101).

This sequence belongs to the phosphohexose mutase family. Mg(2+) is required as a cofactor. Post-translationally, activated by phosphorylation.

It carries out the reaction alpha-D-glucosamine 1-phosphate = D-glucosamine 6-phosphate. Its function is as follows. Catalyzes the conversion of glucosamine-6-phosphate to glucosamine-1-phosphate. This is Phosphoglucosamine mutase from Streptococcus pyogenes serotype M18 (strain MGAS8232).